Consider the following 206-residue polypeptide: Flavin prenyltransferase UbiX (206 aa).

Residues Gly11 to Ser13, Ser37, Ser103 to Thr106, and Arg138 each bind FMN. Dimethylallyl phosphate is bound by residues Tyr168 and Arg184.

This sequence belongs to the UbiX/PAD1 family.

It catalyses the reaction dimethylallyl phosphate + FMNH2 = prenylated FMNH2 + phosphate. In terms of biological role, flavin prenyltransferase that catalyzes the synthesis of the prenylated FMN cofactor (prenyl-FMN) for 4-hydroxy-3-polyprenylbenzoic acid decarboxylase UbiD. The prenyltransferase is metal-independent and links a dimethylallyl moiety from dimethylallyl monophosphate (DMAP) to the flavin N5 and C6 atoms of FMN. The protein is Flavin prenyltransferase UbiX of Synechocystis sp. (strain ATCC 27184 / PCC 6803 / Kazusa).